We begin with the raw amino-acid sequence, 465 residues long: Cysteine--tRNA ligase (465 aa).

C27 contributes to the Zn(2+) binding site. The short motif at 29–39 (PTTYNYIHIGN) is the 'HIGH' region element. Residues C207, H232, and E236 each contribute to the Zn(2+) site. The 'KMSKS' region signature appears at 264 to 268 (KMSKS). Residue K267 coordinates ATP.

This sequence belongs to the class-I aminoacyl-tRNA synthetase family. In terms of assembly, monomer. The cofactor is Zn(2+).

The protein localises to the cytoplasm. It carries out the reaction tRNA(Cys) + L-cysteine + ATP = L-cysteinyl-tRNA(Cys) + AMP + diphosphate. This is Cysteine--tRNA ligase from Carboxydothermus hydrogenoformans (strain ATCC BAA-161 / DSM 6008 / Z-2901).